The sequence spans 212 residues: Phosphoribosylglycinamide formyltransferase (212 aa).

Position 12–14 (12–14 (GTN)) interacts with N(1)-(5-phospho-beta-D-ribosyl)glycinamide. (6R)-10-formyltetrahydrofolate-binding positions include 90–93 (MKIL) and Asn-107. The Proton donor role is filled by His-109.

This sequence belongs to the GART family.

The enzyme catalyses N(1)-(5-phospho-beta-D-ribosyl)glycinamide + (6R)-10-formyltetrahydrofolate = N(2)-formyl-N(1)-(5-phospho-beta-D-ribosyl)glycinamide + (6S)-5,6,7,8-tetrahydrofolate + H(+). It functions in the pathway purine metabolism; IMP biosynthesis via de novo pathway; N(2)-formyl-N(1)-(5-phospho-D-ribosyl)glycinamide from N(1)-(5-phospho-D-ribosyl)glycinamide (10-formyl THF route): step 1/1. Functionally, catalyzes the transfer of a formyl group from 10-formyltetrahydrofolate to 5-phospho-ribosyl-glycinamide (GAR), producing 5-phospho-ribosyl-N-formylglycinamide (FGAR) and tetrahydrofolate. The chain is Phosphoribosylglycinamide formyltransferase from Haemophilus influenzae (strain ATCC 51907 / DSM 11121 / KW20 / Rd).